The chain runs to 188 residues: Adenine phosphoribosyltransferase (188 aa).

The protein belongs to the purine/pyrimidine phosphoribosyltransferase family. Homodimer.

It is found in the cytoplasm. It catalyses the reaction AMP + diphosphate = 5-phospho-alpha-D-ribose 1-diphosphate + adenine. It participates in purine metabolism; AMP biosynthesis via salvage pathway; AMP from adenine: step 1/1. In terms of biological role, catalyzes a salvage reaction resulting in the formation of AMP, that is energically less costly than de novo synthesis. This chain is Adenine phosphoribosyltransferase, found in Burkholderia orbicola (strain MC0-3).